Reading from the N-terminus, the 214-residue chain is Adenylate kinase (214 aa).

Position 10–15 (10–15) interacts with ATP; that stretch reads GAGKGT. An NMP region spans residues 30 to 59; the sequence is STGDMLRAAIKAGTELGKQAKAVIDAGQLV. Residues threonine 31, arginine 36, 57–59, 85–88, and glutamine 92 each bind AMP; these read QLV and GFPR. The segment at 122-159 is LID; sequence GRRAHLPSGRTYHVVYNPPKVEGKDDVTGEDLVVRDDD. ATP contacts are provided by residues arginine 123 and 132–133; that span reads TY. AMP-binding residues include arginine 156 and arginine 167. Lysine 200 serves as a coordination point for ATP.

The protein belongs to the adenylate kinase family. As to quaternary structure, monomer.

It localises to the cytoplasm. The catalysed reaction is AMP + ATP = 2 ADP. Its pathway is purine metabolism; AMP biosynthesis via salvage pathway; AMP from ADP: step 1/1. In terms of biological role, catalyzes the reversible transfer of the terminal phosphate group between ATP and AMP. Plays an important role in cellular energy homeostasis and in adenine nucleotide metabolism. This Vibrio vulnificus (strain CMCP6) protein is Adenylate kinase.